We begin with the raw amino-acid sequence, 153 residues long: Transcriptional repressor NrdR 3 (153 aa).

Positions 1 to 26 are disordered; it reads MRCPFCGHDDTQVKDSRPTEDNSAIR. Residues 3–34 fold into a zinc finger; it reads CPFCGHDDTQVKDSRPTEDNSAIRRRRSCPEC. The span at 7–24 shows a compositional bias: basic and acidic residues; that stretch reads GHDDTQVKDSRPTEDNSA. Residues 49 to 139 enclose the ATP-cone domain; it reads LVVIKKDGGR…VYRNFREAKD (91 aa).

The protein belongs to the NrdR family. The cofactor is Zn(2+).

Functionally, negatively regulates transcription of bacterial ribonucleotide reductase nrd genes and operons by binding to NrdR-boxes. This is Transcriptional repressor NrdR 3 from Paramagnetospirillum magneticum (strain ATCC 700264 / AMB-1) (Magnetospirillum magneticum).